We begin with the raw amino-acid sequence, 101 residues long: MIPGEYQIQDGDIELNAGRRTLTLCVANSGDRPIQVGSHYHFFETNDALTFDRAASRGMRLNIPAGTAVRFEPGQSREVELVELAGERRVFGFAGRVMGAL.

Belongs to the urease beta subunit family. In terms of assembly, heterotrimer of UreA (gamma), UreB (beta) and UreC (alpha) subunits. Three heterotrimers associate to form the active enzyme.

It is found in the cytoplasm. The enzyme catalyses urea + 2 H2O + H(+) = hydrogencarbonate + 2 NH4(+). The protein operates within nitrogen metabolism; urea degradation; CO(2) and NH(3) from urea (urease route): step 1/1. This is Urease subunit beta from Stutzerimonas stutzeri (strain A1501) (Pseudomonas stutzeri).